We begin with the raw amino-acid sequence, 315 residues long: Transaldolase (315 aa).

The active-site Schiff-base intermediate with substrate is the lysine 125.

This sequence belongs to the transaldolase family. Type 1 subfamily. As to quaternary structure, homodimer.

The protein localises to the cytoplasm. It catalyses the reaction D-sedoheptulose 7-phosphate + D-glyceraldehyde 3-phosphate = D-erythrose 4-phosphate + beta-D-fructose 6-phosphate. It functions in the pathway carbohydrate degradation; pentose phosphate pathway; D-glyceraldehyde 3-phosphate and beta-D-fructose 6-phosphate from D-ribose 5-phosphate and D-xylulose 5-phosphate (non-oxidative stage): step 2/3. Transaldolase is important for the balance of metabolites in the pentose-phosphate pathway. This Polaromonas naphthalenivorans (strain CJ2) protein is Transaldolase.